The chain runs to 406 residues: GTPase Obg (406 aa).

The Obg domain maps to 1 to 159; that stretch reads MRFVDEAVIT…REIRLELKVL (159 aa). Residues 120-143 are disordered; that stretch reads GGEGGLGNTHFKSSTNRAPRKCTT. The OBG-type G domain maps to 160–333; sequence ADVGLLGMPN…VVYYLMDQIE (174 aa). GTP is bound by residues 166 to 173, 191 to 195, 213 to 216, 283 to 286, and 314 to 316; these read GMPNAGKS, FTTMV, DIPG, NKLD, and SGL. Mg(2+) contacts are provided by serine 173 and threonine 193. Positions 381–406 are disordered; it reads ESMMDDDDDFDDDEDDGDVESIYVRD. The segment covering 383 to 399 has biased composition (acidic residues); that stretch reads MMDDDDDFDDDEDDGDV.

Belongs to the TRAFAC class OBG-HflX-like GTPase superfamily. OBG GTPase family. Monomer. The cofactor is Mg(2+).

Its subcellular location is the cytoplasm. Functionally, an essential GTPase which binds GTP, GDP and possibly (p)ppGpp with moderate affinity, with high nucleotide exchange rates and a fairly low GTP hydrolysis rate. Plays a role in control of the cell cycle, stress response, ribosome biogenesis and in those bacteria that undergo differentiation, in morphogenesis control. This is GTPase Obg from Acinetobacter baumannii (strain SDF).